Reading from the N-terminus, the 60-residue chain is MDHRLLEIIACPVCNGKLWYNQEKQELICKLDNLAFPLRDGIPVLLENEARSLTSDESKS.

Belongs to the UPF0434 family.

The polypeptide is UPF0434 protein YcaR (Salmonella arizonae (strain ATCC BAA-731 / CDC346-86 / RSK2980)).